We begin with the raw amino-acid sequence, 338 residues long: DNA-directed RNA polymerase subunit alpha (338 aa).

Residues Met-1–Asn-225 are alpha N-terminal domain (alpha-NTD). Residues Tyr-242–Glu-338 form an alpha C-terminal domain (alpha-CTD) region. The tract at residues Phe-314–Glu-338 is disordered.

It belongs to the RNA polymerase alpha chain family. As to quaternary structure, homodimer. The RNAP catalytic core consists of 2 alpha, 1 beta, 1 beta' and 1 omega subunit. When a sigma factor is associated with the core the holoenzyme is formed, which can initiate transcription.

It catalyses the reaction RNA(n) + a ribonucleoside 5'-triphosphate = RNA(n+1) + diphosphate. DNA-dependent RNA polymerase catalyzes the transcription of DNA into RNA using the four ribonucleoside triphosphates as substrates. The protein is DNA-directed RNA polymerase subunit alpha of Corynebacterium diphtheriae (strain ATCC 700971 / NCTC 13129 / Biotype gravis).